A 311-amino-acid chain; its full sequence is Glutaminase (311 aa).

Substrate contacts are provided by S66, N116, E162, N169, Y193, Y245, and V263.

It belongs to the glutaminase family. In terms of assembly, homotetramer.

The catalysed reaction is L-glutamine + H2O = L-glutamate + NH4(+). The polypeptide is Glutaminase (Rhodopseudomonas palustris (strain HaA2)).